Reading from the N-terminus, the 253-residue chain is 5'-nucleotidase SurE (253 aa).

The a divalent metal cation site is built by D8, D9, S39, and N92.

Belongs to the SurE nucleotidase family. It depends on a divalent metal cation as a cofactor.

The protein localises to the cytoplasm. It carries out the reaction a ribonucleoside 5'-phosphate + H2O = a ribonucleoside + phosphate. In terms of biological role, nucleotidase that shows phosphatase activity on nucleoside 5'-monophosphates. The polypeptide is 5'-nucleotidase SurE (Burkholderia mallei (strain NCTC 10247)).